Here is a 289-residue protein sequence, read N- to C-terminus: MKDRLEQLKAKQLTQDDDTDAVEIAIDNTAFMDEFFSEIEETRLNIDKISEHVEEAKKLYSIILSAPIPEPKTKDDLEQLTTEIKKRANNVRNKLKSMEKHIEEDEVRSSADLRIRKSQHSVLSRKFVEVMTKYNEAQVDFRERSKGRIQRQLEITGKKTTDEELEEMLESGNPAIFTSGIIDSQISKQALSEIEGRHKDIVRLESSIKELHDMFMDIAMLVENQGEMLDNIELNVMHTVDHVEKARDETKKAVKYQSQARKKLIIIIVLVVVLLGILALIIGLSVGLN.

Residues 1 to 263 (MKDRLEQLKA…VKYQSQARKK (263 aa)) lie on the Cytoplasmic side of the membrane. The stretch at 32–111 (MDEFFSEIEE…IEEDEVRSSA (80 aa)) forms a coiled coil. In terms of domain architecture, t-SNARE coiled-coil homology spans 191 to 253 (LSEIEGRHKD…EKARDETKKA (63 aa)). The chain crosses the membrane as a helical; Anchor for type IV membrane protein span at residues 264–284 (LIIIIVLVVVLLGILALIIGL). Topologically, residues 285-289 (SVGLN) are extracellular.

This sequence belongs to the syntaxin family. Interacts with REEP6. Interacts with PRPH2 in rod and cone photoreceptors. Interacts with ROM1. Interacts with SNAP25. Interacts with VAMP2. In terms of assembly, interacts with IPO5. As to expression, expressed in small intestine, kidney, pancreas, placenta as well as in retina. Weaker expression in lung, liver and heart. Not expressed in brain and skeletal muscle. Expressed only in the retina. In terms of tissue distribution, ubiquitously expressed.

The protein localises to the apical cell membrane. It is found in the nucleus. Potentially involved in docking of synaptic vesicles at presynaptic active zones. Apical receptor involved in membrane fusion of apical vesicles. Its function is as follows. Essential for survival of retinal photoreceetors. Functionally, functions as a regulator of gene expression. This is Syntaxin-3 (STX3) from Homo sapiens (Human).